Reading from the N-terminus, the 481-residue chain is 3-isopropylmalate dehydratase large subunit (481 aa).

3 residues coordinate [4Fe-4S] cluster: Cys363, Cys423, and Cys426. A disordered region spans residues 434–465 (LRPGQRAASTSNRNFEGRQGRGGRTHLVSPPV).

It belongs to the aconitase/IPM isomerase family. LeuC type 1 subfamily. Heterodimer of LeuC and LeuD. It depends on [4Fe-4S] cluster as a cofactor.

It catalyses the reaction (2R,3S)-3-isopropylmalate = (2S)-2-isopropylmalate. It participates in amino-acid biosynthesis; L-leucine biosynthesis; L-leucine from 3-methyl-2-oxobutanoate: step 2/4. In terms of biological role, catalyzes the isomerization between 2-isopropylmalate and 3-isopropylmalate, via the formation of 2-isopropylmaleate. In Salinispora tropica (strain ATCC BAA-916 / DSM 44818 / JCM 13857 / NBRC 105044 / CNB-440), this protein is 3-isopropylmalate dehydratase large subunit.